Consider the following 308-residue polypeptide: Ribosomal RNA small subunit methyltransferase H (308 aa).

S-adenosyl-L-methionine contacts are provided by residues 32–34 (AGH), Asp51, Phe78, Asp99, and Gln106.

It belongs to the methyltransferase superfamily. RsmH family.

It localises to the cytoplasm. It carries out the reaction cytidine(1402) in 16S rRNA + S-adenosyl-L-methionine = N(4)-methylcytidine(1402) in 16S rRNA + S-adenosyl-L-homocysteine + H(+). Functionally, specifically methylates the N4 position of cytidine in position 1402 (C1402) of 16S rRNA. This is Ribosomal RNA small subunit methyltransferase H from Mesoplasma florum (strain ATCC 33453 / NBRC 100688 / NCTC 11704 / L1) (Acholeplasma florum).